The following is a 578-amino-acid chain: Maltogenic alpha-amylase (578 aa).

The protein belongs to the glycosyl hydrolase 13 family.

It carries out the reaction hydrolysis of (1-&gt;4)-alpha-D-glucosidic linkages in polysaccharides so as to remove successive alpha-maltose residues from the non-reducing ends of the chains.. Its function is as follows. Converts starch into maltose. In contrary to other maltogenic alpha-amylases BlmA cannot hydrolyze 1,4-alpha-glucosidic linkage next to 1,6-alpha-glucosidic linkages. This Bacillus licheniformis protein is Maltogenic alpha-amylase (blmA).